The following is a 140-amino-acid chain: Cysteine desulfuration protein SufE (140 aa).

Catalysis depends on Cys-51, which acts as the Cysteine persulfide intermediate.

This sequence belongs to the SufE family. As to quaternary structure, homodimer. Interacts with SufS.

The protein resides in the cytoplasm. It participates in cofactor biosynthesis; iron-sulfur cluster biosynthesis. Participates in cysteine desulfuration mediated by SufS. Cysteine desulfuration mobilizes sulfur from L-cysteine to yield L-alanine and constitutes an essential step in sulfur metabolism for biosynthesis of a variety of sulfur-containing biomolecules. Functions as a sulfur acceptor for SufS, by mediating the direct transfer of the sulfur atom from the S-sulfanylcysteine of SufS, an intermediate product of cysteine desulfuration process. This chain is Cysteine desulfuration protein SufE, found in Yersinia pestis bv. Antiqua (strain Antiqua).